The chain runs to 311 residues: Putative dihydroorotate dehydrogenase A (fumarate) (311 aa).

Residues Lys45, 69 to 73 (NSMGL), and Asn128 each bind substrate. Position 45 to 46 (45 to 46 (KT)) interacts with FMN. FMN is bound at residue Asn128. The active-site Nucleophile is the Cys131. The FMN site is built by Lys165 and Val193. 194 to 195 (NS) is a binding site for substrate. Residues Gly220, 248-249 (GG), and 270-271 (GT) contribute to the FMN site.

This sequence belongs to the dihydroorotate dehydrogenase family. Type 1 subfamily. As to quaternary structure, homodimer. The cofactor is FMN.

The protein localises to the cytoplasm. It catalyses the reaction (S)-dihydroorotate + fumarate = orotate + succinate. It participates in pyrimidine metabolism; UMP biosynthesis via de novo pathway. Catalyzes the conversion of dihydroorotate to orotate with fumarate as the electron acceptor. The polypeptide is Putative dihydroorotate dehydrogenase A (fumarate) (pyrD) (Streptococcus pyogenes serotype M18 (strain MGAS8232)).